A 604-amino-acid polypeptide reads, in one-letter code: Lipoprotein LpqB (604 aa).

The signal sequence occupies residues Met-1 to Gly-27. Cys-28 carries N-palmitoyl cysteine lipidation. A lipid anchor (S-diacylglycerol cysteine) is attached at Cys-28. The tract at residues Ser-35–Asp-60 is disordered.

The protein belongs to the LpqB lipoprotein family.

The protein localises to the cell membrane. This is Lipoprotein LpqB from Nocardia farcinica (strain IFM 10152).